The primary structure comprises 471 residues: ATP synthase subunit beta (471 aa).

An ATP-binding site is contributed by 153 to 160 (GGAGVGKT).

This sequence belongs to the ATPase alpha/beta chains family. F-type ATPases have 2 components, CF(1) - the catalytic core - and CF(0) - the membrane proton channel. CF(1) has five subunits: alpha(3), beta(3), gamma(1), delta(1), epsilon(1). CF(0) has four main subunits: a(1), b(1), b'(1) and c(9-12).

It localises to the cell membrane. It carries out the reaction ATP + H2O + 4 H(+)(in) = ADP + phosphate + 5 H(+)(out). Its function is as follows. Produces ATP from ADP in the presence of a proton gradient across the membrane. The catalytic sites are hosted primarily by the beta subunits. The sequence is that of ATP synthase subunit beta from Chloroflexus aggregans (strain MD-66 / DSM 9485).